Reading from the N-terminus, the 1709-residue chain is Acrosomal protein KIAA1210 (1709 aa).

8 disordered regions span residues 207 to 226 (PVRE…GSKA), 239 to 275 (PERS…SKVP), 451 to 663 (PNLD…AEKT), 763 to 973 (PPRS…MAVE), 1211 to 1382 (LKRG…SVNA), 1408 to 1516 (TKKF…GRGH), 1539 to 1571 (ADKQ…QSDY), and 1589 to 1653 (FKAH…KSVG). Over residues 257 to 272 (PQQRSHISRTLPKPRS) the composition is skewed to basic residues. Residues 473-490 (EEEKSITKPKEINEKKLG) are compositionally biased toward basic and acidic residues. 2 stretches are compositionally biased toward polar residues: residues 494–505 (ADSSSQKQNNKT) and 514–527 (DQAP…SQGY). Over residues 595-608 (EQPTTSQPETTTPQ) the composition is skewed to low complexity. Basic and acidic residues predominate over residues 651–663 (PYHEDAASGAEKT). Residues 777–794 (EEVSSDSENIPEEGDGSE) are compositionally biased toward acidic residues. Polar residues-rich tracts occupy residues 886–941 (KNQQ…QSDS), 1288–1299 (FKEQLSPRQLSQ), 1332–1350 (HSSQ…SSKG), 1366–1376 (PSSSPFQQQVH), and 1457–1469 (DGNN…LSNQ). Residues 1502–1513 (SVPSGPISSSVG) show a composition bias toward low complexity. Basic and acidic residues predominate over residues 1542-1552 (QQSRPKSESMA).

As to quaternary structure, interacts with TOP2B.

It is found in the cytoplasmic vesicle. The protein localises to the secretory vesicle. It localises to the acrosome. The protein is Acrosomal protein KIAA1210 of Homo sapiens (Human).